A 180-amino-acid polypeptide reads, in one-letter code: ATP synthase subunit delta (180 aa).

Belongs to the ATPase delta chain family. As to quaternary structure, F-type ATPases have 2 components, F(1) - the catalytic core - and F(0) - the membrane proton channel. F(1) has five subunits: alpha(3), beta(3), gamma(1), delta(1), epsilon(1). F(0) has three main subunits: a(1), b(2) and c(10-14). The alpha and beta chains form an alternating ring which encloses part of the gamma chain. F(1) is attached to F(0) by a central stalk formed by the gamma and epsilon chains, while a peripheral stalk is formed by the delta and b chains.

It localises to the cell inner membrane. In terms of biological role, f(1)F(0) ATP synthase produces ATP from ADP in the presence of a proton or sodium gradient. F-type ATPases consist of two structural domains, F(1) containing the extramembraneous catalytic core and F(0) containing the membrane proton channel, linked together by a central stalk and a peripheral stalk. During catalysis, ATP synthesis in the catalytic domain of F(1) is coupled via a rotary mechanism of the central stalk subunits to proton translocation. Functionally, this protein is part of the stalk that links CF(0) to CF(1). It either transmits conformational changes from CF(0) to CF(1) or is implicated in proton conduction. This Acidovorax sp. (strain JS42) protein is ATP synthase subunit delta.